A 244-amino-acid polypeptide reads, in one-letter code: LexA repressor (244 aa).

Positions M1 to D24 are disordered. Positions D10 to D24 are enriched in low complexity. The segment at residues I58–R78 is a DNA-binding region (H-T-H motif). Active-site for autocatalytic cleavage activity residues include S168 and K205.

This sequence belongs to the peptidase S24 family. Homodimer.

The catalysed reaction is Hydrolysis of Ala-|-Gly bond in repressor LexA.. Its function is as follows. Represses a number of genes involved in the response to DNA damage (SOS response), including recA and lexA. In the presence of single-stranded DNA, RecA interacts with LexA causing an autocatalytic cleavage which disrupts the DNA-binding part of LexA, leading to derepression of the SOS regulon and eventually DNA repair. This is LexA repressor from Mycobacterium marinum (strain ATCC BAA-535 / M).